The sequence spans 87 residues: U3-theraphotoxin-Hhn1i (87 aa).

The signal sequence occupies residues 1 to 24; sequence MVNMEASMFLTFAGLVLLFVVCYA. Positions 25–52 are excised as a propeptide; the sequence is SESEEKEFPKEMLSSIFAVDNDFKQEER. Cystine bridges form between cysteine 54-cysteine 67, cysteine 61-cysteine 72, and cysteine 66-cysteine 79.

It belongs to the neurotoxin 10 (Hwtx-1) family. 51 (Hntx-8) subfamily. Hntx-8 sub-subfamily. Expressed by the venom gland.

Its subcellular location is the secreted. In terms of biological role, ion channel inhibitor. This Cyriopagopus hainanus (Chinese bird spider) protein is U3-theraphotoxin-Hhn1i.